The sequence spans 239 residues: Carboxy-S-adenosyl-L-methionine synthase (239 aa).

S-adenosyl-L-methionine is bound by residues tyrosine 36, 61 to 63 (GCS), 111 to 112 (DI), asparagine 126, and arginine 193.

This sequence belongs to the class I-like SAM-binding methyltransferase superfamily. Cx-SAM synthase family. In terms of assembly, homodimer.

It carries out the reaction prephenate + S-adenosyl-L-methionine = carboxy-S-adenosyl-L-methionine + 3-phenylpyruvate + H2O. Catalyzes the conversion of S-adenosyl-L-methionine (SAM) to carboxy-S-adenosyl-L-methionine (Cx-SAM). In Nitratiruptor sp. (strain SB155-2), this protein is Carboxy-S-adenosyl-L-methionine synthase.